The following is a 98-amino-acid chain: MTLIHMNILMAFSMSLMGLLMYRSHLMSALLCLEGMMLSLFVLAALTILSSHFTLANMMPIILLVFAACEAAIGLALLVMVSNTYGTDYVQNLNLLQC.

Transmembrane regions (helical) follow at residues 1 to 21 (MTLI…GLLM), 29 to 49 (ALLC…LTIL), and 61 to 81 (IILL…LVMV).

It belongs to the complex I subunit 4L family. Core subunit of respiratory chain NADH dehydrogenase (Complex I) which is composed of 45 different subunits.

It localises to the mitochondrion inner membrane. It catalyses the reaction a ubiquinone + NADH + 5 H(+)(in) = a ubiquinol + NAD(+) + 4 H(+)(out). Its function is as follows. Core subunit of the mitochondrial membrane respiratory chain NADH dehydrogenase (Complex I) which catalyzes electron transfer from NADH through the respiratory chain, using ubiquinone as an electron acceptor. Part of the enzyme membrane arm which is embedded in the lipid bilayer and involved in proton translocation. The protein is NADH-ubiquinone oxidoreductase chain 4L (MT-ND4L) of Balaenoptera physalus (Fin whale).